Consider the following 261-residue polypeptide: Ribosomal RNA small subunit methyltransferase J (261 aa).

S-adenosyl-L-methionine contacts are provided by residues 101-102 (RD), 117-118 (ER), 153-154 (SS), and Asp176.

It belongs to the methyltransferase superfamily. RsmJ family.

Its subcellular location is the cytoplasm. The catalysed reaction is guanosine(1516) in 16S rRNA + S-adenosyl-L-methionine = N(2)-methylguanosine(1516) in 16S rRNA + S-adenosyl-L-homocysteine + H(+). Specifically methylates the guanosine in position 1516 of 16S rRNA. The sequence is that of Ribosomal RNA small subunit methyltransferase J from Vibrio cholerae serotype O1 (strain ATCC 39315 / El Tor Inaba N16961).